The sequence spans 538 residues: Non-specific phospholipase C4 (538 aa).

The segment at 91-112 is disordered; sequence KPWDSGKPDPNPGHPNMSGFAQ.

This sequence belongs to the bacterial phospholipase C family. Expressed in root tips, cotyledons, on leaf margins, stems, young anthers and funiculus.

The protein resides in the cell membrane. It carries out the reaction a 1,2-diacyl-sn-glycero-3-phosphocholine + H2O = phosphocholine + a 1,2-diacyl-sn-glycerol + H(+). In terms of biological role, non-specific phospholipase C (PLC) which assumes major PLC activity during inorganic phosphate starvation. Substrate preference is phosphatidylcholine (PC), but can also hydrolyze phosphatidylethanolamine (PE) with lower efficiency. Has no activity toward phosphatidic acid (PA). Plays an important role in the supply of both inorganic phosphate and diacylglycerol from membrane-localized phospholipids during phosphate deprivation. May be required for lipid-derived signaling molecules that positively modulate abscisic acid (ABA) response and promote plant tolerance to drought and salt stresses. May be involved in brassinolide-mediated signaling in root development. The chain is Non-specific phospholipase C4 (NPC4) from Arabidopsis thaliana (Mouse-ear cress).